A 609-amino-acid chain; its full sequence is Glutamine--fructose-6-phosphate aminotransferase [isomerizing] (609 aa).

C2 serves as the catalytic Nucleophile; for GATase activity. The Glutamine amidotransferase type-2 domain occupies 2 to 219 (CGIFGYLGSK…SGELAIVGLG (218 aa)). SIS domains follow at residues 280–426 (ISEK…SKHT) and 458–599 (WAHT…IDCP). The active-site For Fru-6P isomerization activity is K604.

Homodimer.

It is found in the cytoplasm. It catalyses the reaction D-fructose 6-phosphate + L-glutamine = D-glucosamine 6-phosphate + L-glutamate. Functionally, catalyzes the first step in hexosamine metabolism, converting fructose-6P into glucosamine-6P using glutamine as a nitrogen source. The polypeptide is Glutamine--fructose-6-phosphate aminotransferase [isomerizing] (Chlamydia abortus (strain DSM 27085 / S26/3) (Chlamydophila abortus)).